The primary structure comprises 286 residues: Pyridoxal kinase PdxY (286 aa).

Residues serine 9 and 44–45 (TQ) contribute to the substrate site. ATP-binding positions include aspartate 111, alanine 143, glutamate 148, lysine 181, and 208-211 (RPLV). Aspartate 223 is a substrate binding site.

The protein belongs to the pyridoxine kinase family. PdxY subfamily. In terms of assembly, homodimer. Requires Mg(2+) as cofactor.

It carries out the reaction pyridoxal + ATP = pyridoxal 5'-phosphate + ADP + H(+). Its pathway is cofactor metabolism; pyridoxal 5'-phosphate salvage; pyridoxal 5'-phosphate from pyridoxal: step 1/1. Its function is as follows. Pyridoxal kinase involved in the salvage pathway of pyridoxal 5'-phosphate (PLP). Catalyzes the phosphorylation of pyridoxal to PLP. This Yersinia pestis bv. Antiqua (strain Antiqua) protein is Pyridoxal kinase PdxY.